A 297-amino-acid chain; its full sequence is UTP--glucose-1-phosphate uridylyltransferase (297 aa).

It belongs to the UDPGP type 2 family.

The catalysed reaction is alpha-D-glucose 1-phosphate + UTP + H(+) = UDP-alpha-D-glucose + diphosphate. It participates in carbohydrate metabolism; nucleotide-sugar metabolism. It functions in the pathway bacterial outer membrane biogenesis; lipopolysaccharide biosynthesis. The protein is UTP--glucose-1-phosphate uridylyltransferase (galF) of Escherichia coli O157:H7.